We begin with the raw amino-acid sequence, 153 residues long: Ubiquitin/ISG15-conjugating enzyme E2 L6 (153 aa).

The UBC core domain maps to 2–149; that stretch reads MASMRVVKEL…AEEFTLRFGV (148 aa). C86 serves as the catalytic Glycyl thioester intermediate.

This sequence belongs to the ubiquitin-conjugating enzyme family. In terms of assembly, interacts with RNF19A, RNF19B and RNF144B. Interacts with FLT3 (tyrosine phosphorylated). ISGylated. As to expression, present in natural killer cells (at protein level).

It catalyses the reaction S-ubiquitinyl-[E1 ubiquitin-activating enzyme]-L-cysteine + [E2 ubiquitin-conjugating enzyme]-L-cysteine = [E1 ubiquitin-activating enzyme]-L-cysteine + S-ubiquitinyl-[E2 ubiquitin-conjugating enzyme]-L-cysteine.. Its pathway is protein modification; protein ubiquitination. Its function is as follows. Catalyzes the covalent attachment of ubiquitin or ISG15 to other proteins. Functions in the E6/E6-AP-induced ubiquitination of p53/TP53. Promotes ubiquitination and subsequent proteasomal degradation of FLT3. This is Ubiquitin/ISG15-conjugating enzyme E2 L6 (UBE2L6) from Homo sapiens (Human).